The chain runs to 460 residues: Elongation factor 1-alpha (460 aa).

At Gly-2 the chain carries N,N,N-trimethylglycine. Lys-3 is modified (N6,N6-dimethyllysine; alternate). Lys-3 bears the N6-methyllysine; alternate mark. One can recognise a tr-type G domain in the interval 6-241 (KTHINVVVIG…DSIEPPKRPT (236 aa)). Residues 15 to 22 (GHVDSGKS) are G1. 15–22 (GHVDSGKS) provides a ligand contact to GTP. The segment at 71–75 (GITID) is G2. N6,N6,N6-trimethyllysine is present on Lys-80. The interval 92–95 (DAPG) is G3. GTP contacts are provided by residues 92–96 (DAPGH) and 154–157 (NKMD). The tract at residues 154-157 (NKMD) is G4. The segment at 193-195 (SGF) is G5. The residue at position 317 (Lys-317) is an N6,N6-dimethyllysine; alternate. N6-methyllysine; alternate is present on Lys-317. An N6-methyllysine modification is found at Lys-391.

This sequence belongs to the TRAFAC class translation factor GTPase superfamily. Classic translation factor GTPase family. EF-Tu/EF-1A subfamily.

Its subcellular location is the cytoplasm. Functionally, this protein promotes the GTP-dependent binding of aminoacyl-tRNA to the A-site of ribosomes during protein biosynthesis. The protein is Elongation factor 1-alpha (tef1) of Hypocrea jecorina (Trichoderma reesei).